Consider the following 189-residue polypeptide: Elongation factor P 2 (189 aa).

Belongs to the elongation factor P family.

The protein localises to the cytoplasm. Its pathway is protein biosynthesis; polypeptide chain elongation. Its function is as follows. Involved in peptide bond synthesis. Stimulates efficient translation and peptide-bond synthesis on native or reconstituted 70S ribosomes in vitro. Probably functions indirectly by altering the affinity of the ribosome for aminoacyl-tRNA, thus increasing their reactivity as acceptors for peptidyl transferase. The chain is Elongation factor P 2 from Lactobacillus acidophilus (strain ATCC 700396 / NCK56 / N2 / NCFM).